An 887-amino-acid chain; its full sequence is 3-hydroxy-3-methylglutaryl-coenzyme A reductase (887 aa).

At 1-9 (MLSRLFRMH) the chain is on the cytoplasmic side. A helical membrane pass occupies residues 10 to 39 (GLFVASHPWEVIVGTVTLTICMMSMNMFTG). Residues 40-56 (NNKICGWNYECPKFEED) lie on the Lumenal side of the membrane. A helical membrane pass occupies residues 57–78 (VLSSDIIILTITRCIAILYIYF). In terms of domain architecture, SSD spans 61 to 218 (DIIILTITRC…MTFFPACVSL (158 aa)). The INSIG-binding motif motif lies at 75–78 (YIYF). The Cytoplasmic portion of the chain corresponds to 79–89 (QFQNLRQLGSK). Residue lysine 89 forms a Glycyl lysine isopeptide (Lys-Gly) (interchain with G-Cter in ubiquitin) linkage. A helical membrane pass occupies residues 90 to 114 (YILGIAGLFTIFSSFVFSTVVIHFL). Topologically, residues 115-123 (DKELTGLNE) are lumenal. The chain crosses the membrane as a helical span at residues 124–149 (ALPFFLLLIDLSRASALAKFALSSNS). Over 150–159 (QDEVRENIAR) the chain is Cytoplasmic. Residues 160–187 (GMAILGPTFTLDALVECLVIGVGTMSGV) traverse the membrane as a helical segment. The Lumenal portion of the chain corresponds to 188–191 (RQLE). A helical transmembrane segment spans residues 192–220 (IMCCFGCMSVLANYFVFMTFFPACVSLVL). Over 221–248 (ELSRESREGRPIWQLSHFARVLEEEENK) the chain is Cytoplasmic. Lysine 248 participates in a covalent cross-link: Glycyl lysine isopeptide (Lys-Gly) (interchain with G-Cter in ubiquitin). The chain crosses the membrane as a helical span at residues 249–275 (PNPVTQRVKMIMSLGLVLVHAHSRWIA). Residues 276–314 (DPSPQNSTTEHSKVSLGLDEDVSKRIEPSVSLWQFYLSK) are Lumenal-facing. N-linked (GlcNAc...) asparagine glycosylation occurs at asparagine 281. A helical membrane pass occupies residues 315–339 (MISMDIEQVVTLSLAFLLAVKYIFF). Residues 340–887 (EQAETESTLS…LQGTCTKKAA (548 aa)) lie on the Cytoplasmic side of the membrane. Active-site charge relay system residues include glutamate 558, lysine 690, and aspartate 766. Histidine 865 (proton donor) is an active-site residue. Phosphoserine; by AMPK is present on serine 871.

The protein belongs to the HMG-CoA reductase family. Homotetramer. Homodimer. Interacts (via its SSD) with INSIG1; the interaction, accelerated by sterols, leads to the recruitment of HMGCR to AMFR/gp78 for its ubiquitination by the sterol-mediated ERAD pathway. Interacts with UBIAD1. Undergoes sterol-mediated ubiquitination and ER-associated degradation (ERAD). Accumulation of sterols in the endoplasmic reticulum (ER) membrane, triggers binding of the reductase to the ER membrane protein INSIG1 or INSIG2. The INSIG1 binding leads to the recruitment of the ubiquitin ligase, AMFR/gp78, RNF139 or RNF145, initiating ubiquitination of the reductase. The ubiquitinated reductase is then extracted from the ER membrane and delivered to cytosolic 26S proteosomes by a mechanism probably mediated by the ATPase Valosin-containing protein VCP/p97. The INSIG2-binding leads to the recruitment of the ubiquitin ligase RNF139, initiating ubiquitination of the reductase. Lys-248 is the main site of ubiquitination. Ubiquitination is enhanced by the presence of a geranylgeranylated protein. Post-translationally, N-glycosylated. Deglycosylated by NGLY1 on release from the endoplasmic reticulum (ER) in a sterol-mediated manner. In terms of processing, phosphorylated. Phosphorylation at Ser-871 reduces the catalytic activity.

Its subcellular location is the endoplasmic reticulum membrane. It is found in the peroxisome membrane. The enzyme catalyses (R)-mevalonate + 2 NADP(+) + CoA = (3S)-3-hydroxy-3-methylglutaryl-CoA + 2 NADPH + 2 H(+). It functions in the pathway metabolic intermediate biosynthesis; (R)-mevalonate biosynthesis; (R)-mevalonate from acetyl-CoA: step 3/3. Regulated by a negative feedback mechanism through sterols and non-sterol metabolites derived from mevalonate. Phosphorylation at Ser-871 down-regulates the catalytic activity. In terms of biological role, catalyzes the conversion of (3S)-hydroxy-3-methylglutaryl-CoA (HMG-CoA) to mevalonic acid, the rate-limiting step in the synthesis of cholesterol and other isoprenoids, thus plays a critical role in cellular cholesterol homeostasis. The chain is 3-hydroxy-3-methylglutaryl-coenzyme A reductase (HMGCR) from Mesocricetus auratus (Golden hamster).